The chain runs to 699 residues: PTS system glucose-specific EIICBA component (699 aa).

In terms of domain architecture, PTS EIIC type-1 spans 3-424 (KALFGVLQKI…FNLKTPGRED (422 aa)). 11 consecutive transmembrane segments (helical) span residues 16 to 36 (LMLP…GNAM), 66 to 86 (IVFD…LANG), 89 to 109 (VAGI…SAVL), 139 to 159 (IPTL…AALL), 180 to 200 (FVPI…LVIW), 233 to 253 (LIPF…FFSY), 283 to 303 (FMTG…LAIY), 313 to 333 (LVAG…ITEP), 338 to 358 (FLFV…LSFM), 365 to 385 (VKIG…GILP), and 388 to 408 (TAWW…YFGF). Residues 439–520 (GDLPYEILQA…QDIIAGRKPR (82 aa)) enclose the PTS EIIB type-1 domain. Cysteine 461 acts as the Phosphocysteine intermediate; for EIIB activity in catalysis. The PTS EIIA type-1 domain maps to 568 to 672 (DQVFSGKMMG…SLMTPIVFTN (105 aa)). Residue histidine 620 is the Tele-phosphohistidine intermediate; for EIIA activity of the active site.

The protein resides in the cell membrane. The enzyme catalyses N(pros)-phospho-L-histidyl-[protein] + D-glucose(out) = D-glucose 6-phosphate(in) + L-histidyl-[protein]. The catalysed reaction is D-glucosamine(out) + N(pros)-phospho-L-histidyl-[protein] = D-glucosamine 6-phosphate(in) + L-histidyl-[protein]. Functionally, the phosphoenolpyruvate-dependent sugar phosphotransferase system (sugar PTS), a major carbohydrate active transport system, catalyzes the phosphorylation of incoming sugar substrates concomitantly with their translocation across the cell membrane. This system is involved in glucose transport. The system can also transport glucosamine. Its function is as follows. In addition, plays an important role in the phosphorylation of EIIA-deficient PTS transporters. The EIIA domain can transfer a phosphoryl group to EIIA-deficient PTS transporters, enabling growth with maltose, N-acetylglucosamine, sucrose or trehalose as the sole carbon source. The chain is PTS system glucose-specific EIICBA component (ptsG) from Bacillus subtilis (strain 168).